Reading from the N-terminus, the 713-residue chain is uncharacterized protein (713 aa).

The helical transmembrane segment at 686–706 (VWKFNPALYSTITNIFLLIIF) threads the bilayer.

This sequence belongs to the plectrovirus ORF1 family.

Its subcellular location is the host membrane. This is an uncharacterized protein from Spiroplasma melliferum (SpV1).